Reading from the N-terminus, the 359-residue chain is Molybdenum import ATP-binding protein ModC (359 aa).

In terms of domain architecture, ABC transporter spans 1-229 (MLELNFSQQL…SALRPWLQRE (229 aa)). 31–38 (GLSGAGKT) contacts ATP. The Mop domain occupies 289 to 354 (SSSIRNILPV…IKSVSFNRQN (66 aa)).

The protein belongs to the ABC transporter superfamily. Molybdate importer (TC 3.A.1.8) family. As to quaternary structure, the complex is composed of two ATP-binding proteins (ModC), two transmembrane proteins (ModB) and a solute-binding protein (ModA).

Its subcellular location is the cell inner membrane. The catalysed reaction is molybdate(out) + ATP + H2O = molybdate(in) + ADP + phosphate + H(+). Functionally, part of the ABC transporter complex ModABC involved in molybdenum import. Responsible for energy coupling to the transport system. The protein is Molybdenum import ATP-binding protein ModC of Yersinia pseudotuberculosis serotype I (strain IP32953).